Here is a 390-residue protein sequence, read N- to C-terminus: Transforming growth factor beta-1 proprotein (390 aa).

The N-terminal stretch at 1-29 (MPPSGLRLLPLLLPLLWLLVLTPGRPAAG) is a signal peptide. The interval 30–74 (LSTCKTIDMELVKRKRIEAIRGQILSKLRLASPPSQGEVPPGPLP) is straightjacket domain. The tract at residues 75-271 (EAVLALYNST…ATPLERAQHL (197 aa)) is arm domain. Asparagine 82, asparagine 136, and asparagine 176 each carry an N-linked (GlcNAc...) asparagine glycan. The interval 226 to 252 (DSRDNTLQVDINGFTTGRRGDLATIHG) is bowtie tail. Residues 244–246 (RGD) carry the Cell attachment site motif. Cystine bridges form between cysteine 285–cysteine 294, cysteine 293–cysteine 356, cysteine 322–cysteine 387, and cysteine 326–cysteine 389.

This sequence belongs to the TGF-beta family. As to quaternary structure, homodimer; disulfide-linked. Interacts with the serine proteases, HTRA1 and HTRA3: the interaction with either inhibits TGFB1-mediated signaling and the HTRA protease activity is required for this inhibition. May interact with THSD4; this interaction may lead to sequestration by FBN1 microfibril assembly and attenuation of TGFB signaling. Interacts with CD109, DPT and ASPN. Interacts with EFEMP2. Interacts with TSKU; the interaction contributes to regulation of the hair cycle. In terms of assembly, homodimer; disulfide-linked. Interacts with transforming growth factor beta-1 (TGF-beta-1) chain; interaction is non-covalent and maintains TGF-beta-1 in a latent state; each latency-associated peptide (LAP) monomer interacts with TGF-beta-1 in the other monomer. Interacts with LTBP1; leading to regulation of TGF-beta-1 activation. Interacts with LRRC32/GARP; leading to regulation of TGF-beta-1 activation on the surface of activated regulatory T-cells (Tregs). Interacts with LRRC33/NRROS; leading to regulation of TGF-beta-1 in macrophages and microglia. Interacts (via cell attachment site) with integrins ITGAV and ITGB6 (ITGAV:ITGB6), leading to release of the active TGF-beta-1. Interacts with NREP; the interaction results in a decrease in TGFB1 autoinduction. Interacts with HSP90AB1; inhibits latent TGFB1 activation. Interact with PSG9; leading to TGFB1 activation. Interacts with TGFBR3. Homodimer; disulfide-linked. Interacts with TGF-beta receptors (TGFBR1 and TGFBR2), leading to signal transduction. Post-translationally, transforming growth factor beta-1 proprotein: The precursor proprotein is cleaved in the Golgi apparatus by FURIN to form Transforming growth factor beta-1 (TGF-beta-1) and Latency-associated peptide (LAP) chains, which remain non-covalently linked, rendering TGF-beta-1 inactive. In terms of processing, N-glycosylated. Deglycosylation leads to activation of Transforming growth factor beta-1 (TGF-beta-1); mechanisms triggering deglycosylation-driven activation of TGF-beta-1 are however unclear. Highly expressed in bone. Abundantly expressed in articular cartilage and chondrocytes and is increased in osteoarthritis (OA). Colocalizes with ASPN in chondrocytes within OA lesions of articular cartilage.

The protein localises to the secreted. It localises to the extracellular space. The protein resides in the extracellular matrix. In terms of biological role, transforming growth factor beta-1 proprotein: Precursor of the Latency-associated peptide (LAP) and Transforming growth factor beta-1 (TGF-beta-1) chains, which constitute the regulatory and active subunit of TGF-beta-1, respectively. Its function is as follows. Required to maintain the Transforming growth factor beta-1 (TGF-beta-1) chain in a latent state during storage in extracellular matrix. Associates non-covalently with TGF-beta-1 and regulates its activation via interaction with 'milieu molecules', such as LTBP1, LRRC32/GARP and LRRC33/NRROS, that control activation of TGF-beta-1. Interaction with LRRC33/NRROS regulates activation of TGF-beta-1 in macrophages and microglia. Interaction with LRRC32/GARP controls activation of TGF-beta-1 on the surface of activated regulatory T-cells (Tregs). Interaction with integrins (ITGAV:ITGB6 or ITGAV:ITGB8) results in distortion of the Latency-associated peptide chain and subsequent release of the active TGF-beta-1. Functionally, multifunctional protein that regulates the growth and differentiation of various cell types and is involved in various processes, such as normal development, immune function, microglia function and responses to neurodegeneration. Activation into mature form follows different steps: following cleavage of the proprotein in the Golgi apparatus, Latency-associated peptide (LAP) and Transforming growth factor beta-1 (TGF-beta-1) chains remain non-covalently linked rendering TGF-beta-1 inactive during storage in extracellular matrix. At the same time, LAP chain interacts with 'milieu molecules', such as LTBP1, LRRC32/GARP and LRRC33/NRROS that control activation of TGF-beta-1 and maintain it in a latent state during storage in extracellular milieus. TGF-beta-1 is released from LAP by integrins (ITGAV:ITGB6 or ITGAV:ITGB8): integrin-binding to LAP stabilizes an alternative conformation of the LAP bowtie tail and results in distortion of the LAP chain and subsequent release of the active TGF-beta-1. Once activated following release of LAP, TGF-beta-1 acts by binding to TGF-beta receptors (TGFBR1 and TGFBR2), which transduce signal. While expressed by many cells types, TGF-beta-1 only has a very localized range of action within cell environment thanks to fine regulation of its activation by Latency-associated peptide chain (LAP) and 'milieu molecules'. Plays an important role in bone remodeling: acts as a potent stimulator of osteoblastic bone formation, causing chemotaxis, proliferation and differentiation in committed osteoblasts. Can promote either T-helper 17 cells (Th17) or regulatory T-cells (Treg) lineage differentiation in a concentration-dependent manner. At high concentrations, leads to FOXP3-mediated suppression of RORC and down-regulation of IL-17 expression, favoring Treg cell development. At low concentrations in concert with IL-6 and IL-21, leads to expression of the IL-17 and IL-23 receptors, favoring differentiation to Th17 cells. Stimulates sustained production of collagen through the activation of CREB3L1 by regulated intramembrane proteolysis (RIP). Mediates SMAD2/3 activation by inducing its phosphorylation and subsequent translocation to the nucleus. Positively regulates odontoblastic differentiation in dental papilla cells, via promotion of IPO7-mediated translocation of phosphorylated SMAD2 to the nucleus and subsequent transcription of target genes. Can induce epithelial-to-mesenchymal transition (EMT) and cell migration in various cell types. This is Transforming growth factor beta-1 proprotein from Homo sapiens (Human).